A 439-amino-acid polypeptide reads, in one-letter code: uncharacterized protein (439 aa).

2 consecutive CBS domains span residues 195–254 (LTPA…SIEK) and 256–314 (MTKN…KQPQ).

This is an uncharacterized protein from Bacillus subtilis (strain 168).